The sequence spans 226 residues: ATP synthase subunit a (226 aa).

A run of 5 helical transmembrane segments spans residues 20–40, 74–94, 100–120, 162–182, and 187–207; these read LNWF…WLMP, FVSL…PYIF, LTLT…YGWI, LTAN…TGPM, and IILS…SAVA.

This sequence belongs to the ATPase A chain family. In terms of assembly, F-type ATPases have 2 components, CF(1) - the catalytic core - and CF(0) - the membrane proton channel. CF(1) has five subunits: alpha(3), beta(3), gamma(1), delta(1), epsilon(1). CF(0) has three main subunits: a, b and c.

The protein resides in the mitochondrion inner membrane. In terms of biological role, mitochondrial membrane ATP synthase (F(1)F(0) ATP synthase or Complex V) produces ATP from ADP in the presence of a proton gradient across the membrane which is generated by electron transport complexes of the respiratory chain. F-type ATPases consist of two structural domains, F(1) - containing the extramembraneous catalytic core and F(0) - containing the membrane proton channel, linked together by a central stalk and a peripheral stalk. During catalysis, ATP synthesis in the catalytic domain of F(1) is coupled via a rotary mechanism of the central stalk subunits to proton translocation. Key component of the proton channel; it may play a direct role in the translocation of protons across the membrane. The chain is ATP synthase subunit a (mt:ATPase6) from Aedes albopictus (Asian tiger mosquito).